Here is an 81-residue protein sequence, read N- to C-terminus: Putative defensin-like protein 31 (81 aa).

The signal sequence occupies residues 1-26 (MTSSSKCLFFVFLCLAALLTPYLAEA). Cystine bridges form between C38–C58, C44–C70, and C48–C72.

Belongs to the DEFL family.

The protein resides in the secreted. In Arabidopsis thaliana (Mouse-ear cress), this protein is Putative defensin-like protein 31.